Consider the following 465-residue polypeptide: Transposase for insertion sequence IS1202 (465 aa).

The region spanning 157 to 340 is the Integrase catalytic domain; sequence HPSRPRKKFA…APNPSERNLI (184 aa).

Functionally, required for the transposition of the insertion element. This chain is Transposase for insertion sequence IS1202, found in Streptococcus pneumoniae.